The following is a 608-amino-acid chain: UvrABC system protein C (608 aa).

The GIY-YIG domain occupies 13–91 (HDPGVYRMFD…IKTFQPRYNV (79 aa)). The UVR domain maps to 201 to 236 (QQVLDHLIGKMERASRALNFEEAARYRDQIQAVRSV).

It belongs to the UvrC family. As to quaternary structure, interacts with UvrB in an incision complex.

The protein resides in the cytoplasm. Its function is as follows. The UvrABC repair system catalyzes the recognition and processing of DNA lesions. UvrC both incises the 5' and 3' sides of the lesion. The N-terminal half is responsible for the 3' incision and the C-terminal half is responsible for the 5' incision. This is UvrABC system protein C from Mannheimia succiniciproducens (strain KCTC 0769BP / MBEL55E).